A 320-amino-acid chain; its full sequence is uncharacterized protein (320 aa).

The disordered stretch occupies residues 196–273; that stretch reads VVPEYDFDSE…RSKNNSNTTK (78 aa). A compositionally biased stretch (acidic residues) spans 200–210; sequence YDFDSESESDN. Residues 211 to 226 show a composition bias toward basic and acidic residues; that stretch reads SEEKRFVPVLETEKAP. Positions 248–273 are enriched in polar residues; sequence QPKNPKQTTLKNTLDTRSKNNSNTTK.

This is an uncharacterized protein from Acanthamoeba polyphaga mimivirus (APMV).